A 577-amino-acid polypeptide reads, in one-letter code: Multidrug transporter TPO1_2 (577 aa).

Positions 1–63 (MSSTSSDRPY…ALSKNSTQTS (63 aa)) are disordered. Asn-44 and Asn-58 each carry an N-linked (GlcNAc...) asparagine glycan. A run of 12 helical transmembrane segments spans residues 137–157 (VMLCIILCLNCISITMGSSIF), 167–187 (IYHVIPVVAILGITLYVLGFA), 204–224 (GVLVISSFGFALFNFAVATAK), 234–254 (FFAGFIGAAPLAVVPAAFADM), 263–283 (AICLFSLGVFVGPILAPVIGS), 293–313 (WLEYVIACFASAIFVAILFFF), 368–388 (PLLLIVTIYNSFVYGILYLLL), 406–426 (ELPYISLIIGMAICGAFIWWM), 446–466 (LLPMVVAGIVFPIGILWFCWT), 475–495 (WIVPTIAGAFTGFGLIGIFLP), 504–526 (YLLIAASAVAANTFMRSGFGAAF), and 541–561 (YAGLLLGLLAVAMIPVPLLFL).

It belongs to the major facilitator superfamily. DHA1 family. Polyamines/proton antiporter (TC 2.A.1.2.16) subfamily.

It localises to the cell membrane. Functionally, multidrug resistance transporter involved in resistance to azole antifungal drugs such as the imidazoles miconazole, ketoconazole, and tioconazole; as well as the triazoles itraconazole and fluconazole. Also plays a role in the resistance to other antifungal drug families such as the polyene amphotericin B, the pyrimide analog flucytosine, the fungicide mancozeb, and the polyamine spermine. Decreases the intracellular accumulation of clotrimazole by mediating its extrusion from cells. Plays a role in biofilm formation. This is Multidrug transporter TPO1_2 from Candida glabrata (strain ATCC 2001 / BCRC 20586 / JCM 3761 / NBRC 0622 / NRRL Y-65 / CBS 138) (Yeast).